The primary structure comprises 317 residues: Malate dehydrogenase (317 aa).

Residues Gly15 to Gly20 and Asp39 each bind NAD(+). The substrate site is built by Arg88 and Arg94. Residues Asn101 and Val124 to Asn126 each bind NAD(+). Substrate contacts are provided by Asn126 and Arg157. His181 serves as the catalytic Proton acceptor.

It belongs to the LDH/MDH superfamily. MDH type 3 family.

It catalyses the reaction (S)-malate + NAD(+) = oxaloacetate + NADH + H(+). In terms of biological role, catalyzes the reversible oxidation of malate to oxaloacetate. This chain is Malate dehydrogenase, found in Ehrlichia ruminantium (strain Gardel).